We begin with the raw amino-acid sequence, 613 residues long: Protein starmaker (613 aa).

The N-terminal stretch at M1–S20 is a signal peptide. Residues F42–S613 are disordered. Composition is skewed to basic and acidic residues over residues D62–A72, S117–D132, D147–G193, S206–D284, and D291–S449. Residues D450–S465 show a composition bias toward acidic residues. Basic and acidic residues-rich tracts occupy residues S467–S482, D509–S521, and D538–K554. The span at T555–D573 shows a compositional bias: acidic residues. Residues D574–K607 are compositionally biased toward basic and acidic residues.

The protein localises to the secreted. Essential for the formation of otoliths in the inner ear of developing larvae and for the perception of gravity and acceleration. May be one of the organic components of the ortholiths. In Danio rerio (Zebrafish), this protein is Protein starmaker (stm).